The primary structure comprises 274 residues: Pantothenate synthetase (274 aa).

27–34 is a binding site for ATP; the sequence is MGALHQGH. The active-site Proton donor is the His-34. Gln-58 is a binding site for (R)-pantoate. A beta-alanine-binding site is contributed by Gln-58. Residue 144 to 147 coordinates ATP; sequence GKKD. Gln-150 lines the (R)-pantoate pocket. Residues Ile-173 and 181–184 each bind ATP; that span reads LSSR.

This sequence belongs to the pantothenate synthetase family. Homodimer.

The protein resides in the cytoplasm. The catalysed reaction is (R)-pantoate + beta-alanine + ATP = (R)-pantothenate + AMP + diphosphate + H(+). The protein operates within cofactor biosynthesis; (R)-pantothenate biosynthesis; (R)-pantothenate from (R)-pantoate and beta-alanine: step 1/1. Functionally, catalyzes the condensation of pantoate with beta-alanine in an ATP-dependent reaction via a pantoyl-adenylate intermediate. The chain is Pantothenate synthetase from Sulfurovum sp. (strain NBC37-1).